The primary structure comprises 433 residues: UDP-N-acetylmuramoylalanine--D-glutamate ligase (433 aa).

125–131 (GTSGKTT) is a binding site for ATP.

It belongs to the MurCDEF family.

The protein localises to the cytoplasm. The catalysed reaction is UDP-N-acetyl-alpha-D-muramoyl-L-alanine + D-glutamate + ATP = UDP-N-acetyl-alpha-D-muramoyl-L-alanyl-D-glutamate + ADP + phosphate + H(+). Its pathway is cell wall biogenesis; peptidoglycan biosynthesis. In terms of biological role, cell wall formation. Catalyzes the addition of glutamate to the nucleotide precursor UDP-N-acetylmuramoyl-L-alanine (UMA). The protein is UDP-N-acetylmuramoylalanine--D-glutamate ligase of Nitratidesulfovibrio vulgaris (strain ATCC 29579 / DSM 644 / CCUG 34227 / NCIMB 8303 / VKM B-1760 / Hildenborough) (Desulfovibrio vulgaris).